Here is a 311-residue protein sequence, read N- to C-terminus: Olfactory receptor 5AN1 (311 aa).

The Extracellular segment spans residues 1 to 26; sequence MTGGGNITEITYFILLGFSDFPRIIK. Residue Asn-6 is glycosylated (N-linked (GlcNAc...) asparagine). Residues 27–47 form a helical membrane-spanning segment; it reads VLFTIFLVIYITSLAWNLSLI. The Cytoplasmic portion of the chain corresponds to 48–55; the sequence is VLIRMDSH. A helical transmembrane segment spans residues 56–76; the sequence is LHTPMYFFLSNLSFIDVCYIS. Topologically, residues 77 to 100 are extracellular; that stretch reads STVPKMLSNLLQEQQTITFVGCII. Cys-98 and Cys-190 are disulfide-bonded. The helical transmembrane segment at 101 to 121 threads the bilayer; the sequence is QYFIFSTMGLSESCLMTAMAY. Topologically, residues 122 to 134 are cytoplasmic; that stretch reads DRYAAICNPLLYS. The chain crosses the membrane as a helical span at residues 135-155; that stretch reads SIMSPTLCVWMVLGAYMTGLT. The Extracellular portion of the chain corresponds to 156–197; that stretch reads ASLFQIGALLQLHFCGSNVIRHFFCDMPQLLILSCTDTFFVQ. The chain crosses the membrane as a helical span at residues 198–218; it reads VMTAILTMFFGIASALVIMIS. Residues 219–238 lie on the Cytoplasmic side of the membrane; the sequence is YGYIGISIMKITSAKGRSKA. Residues 239–259 form a helical membrane-spanning segment; it reads FNTCASHLTAVSLFYTSGIFV. The Extracellular portion of the chain corresponds to 260–272; sequence YLSSSSGGSSSFD. Residues 273–293 traverse the membrane as a helical segment; the sequence is RFASVFYTVVIPMLNPLIYSL. Residues 294-311 are Cytoplasmic-facing; that stretch reads RNKEIKDALKRLQKRKCC.

Belongs to the G-protein coupled receptor 1 family.

It is found in the cell membrane. Odorant receptor for musk, which specifically recognizes muscone, musk xylol, and musk ketone. Ligand-binding causes a conformation change that triggers signaling via G(s)-class of G alpha protein GNAL, activating adenylyl cyclase. The chain is Olfactory receptor 5AN1 from Homo sapiens (Human).